A 211-amino-acid chain; its full sequence is Thiamine-phosphate synthase (211 aa).

Residues 39-43 and Asn-71 each bind 4-amino-2-methyl-5-(diphosphooxymethyl)pyrimidine; that span reads QLREK. Residues Asp-72 and Asp-91 each contribute to the Mg(2+) site. Residue Ser-110 coordinates 4-amino-2-methyl-5-(diphosphooxymethyl)pyrimidine. 136-138 is a 2-[(2R,5Z)-2-carboxy-4-methylthiazol-5(2H)-ylidene]ethyl phosphate binding site; sequence TAT. Lys-139 contributes to the 4-amino-2-methyl-5-(diphosphooxymethyl)pyrimidine binding site. Residues Ala-167 and 187 to 188 contribute to the 2-[(2R,5Z)-2-carboxy-4-methylthiazol-5(2H)-ylidene]ethyl phosphate site; that span reads VS.

This sequence belongs to the thiamine-phosphate synthase family. Mg(2+) serves as cofactor.

The catalysed reaction is 2-[(2R,5Z)-2-carboxy-4-methylthiazol-5(2H)-ylidene]ethyl phosphate + 4-amino-2-methyl-5-(diphosphooxymethyl)pyrimidine + 2 H(+) = thiamine phosphate + CO2 + diphosphate. It carries out the reaction 2-(2-carboxy-4-methylthiazol-5-yl)ethyl phosphate + 4-amino-2-methyl-5-(diphosphooxymethyl)pyrimidine + 2 H(+) = thiamine phosphate + CO2 + diphosphate. The enzyme catalyses 4-methyl-5-(2-phosphooxyethyl)-thiazole + 4-amino-2-methyl-5-(diphosphooxymethyl)pyrimidine + H(+) = thiamine phosphate + diphosphate. Its pathway is cofactor biosynthesis; thiamine diphosphate biosynthesis; thiamine phosphate from 4-amino-2-methyl-5-diphosphomethylpyrimidine and 4-methyl-5-(2-phosphoethyl)-thiazole: step 1/1. Condenses 4-methyl-5-(beta-hydroxyethyl)thiazole monophosphate (THZ-P) and 2-methyl-4-amino-5-hydroxymethyl pyrimidine pyrophosphate (HMP-PP) to form thiamine monophosphate (TMP). The sequence is that of Thiamine-phosphate synthase from Solidesulfovibrio magneticus (strain ATCC 700980 / DSM 13731 / RS-1) (Desulfovibrio magneticus).